Consider the following 258-residue polypeptide: UPF0246 protein CGSHiEE_07045 (258 aa).

It belongs to the UPF0246 family.

In Haemophilus influenzae (strain PittEE), this protein is UPF0246 protein CGSHiEE_07045.